The sequence spans 751 residues: Lysine decarboxylase LdcA (751 aa).

It belongs to the Orn/Lys/Arg decarboxylase class-I family. As to quaternary structure, homodecamer.

The catalysed reaction is L-lysine + H(+) = cadaverine + CO2. Its function is as follows. Plays an essential role in lysine utilization by acting as a lysine decarboxylase. In Pseudomonas aeruginosa (strain ATCC 15692 / DSM 22644 / CIP 104116 / JCM 14847 / LMG 12228 / 1C / PRS 101 / PAO1), this protein is Lysine decarboxylase LdcA.